A 389-amino-acid polypeptide reads, in one-letter code: Methylthioribose-1-phosphate isomerase (389 aa).

Asp-258 serves as the catalytic Proton donor.

It belongs to the eIF-2B alpha/beta/delta subunits family. MtnA subfamily.

The protein localises to the cytoplasm. Its subcellular location is the nucleus. It carries out the reaction 5-(methylsulfanyl)-alpha-D-ribose 1-phosphate = 5-(methylsulfanyl)-D-ribulose 1-phosphate. The protein operates within amino-acid biosynthesis; L-methionine biosynthesis via salvage pathway; L-methionine from S-methyl-5-thio-alpha-D-ribose 1-phosphate: step 1/6. Functionally, catalyzes the interconversion of methylthioribose-1-phosphate (MTR-1-P) into methylthioribulose-1-phosphate (MTRu-1-P). The sequence is that of Methylthioribose-1-phosphate isomerase from Chaetomium globosum (strain ATCC 6205 / CBS 148.51 / DSM 1962 / NBRC 6347 / NRRL 1970) (Soil fungus).